The sequence spans 239 residues: Small ribosomal subunit protein uS2 (239 aa).

It belongs to the universal ribosomal protein uS2 family.

The protein is Small ribosomal subunit protein uS2 of Francisella philomiragia subsp. philomiragia (strain ATCC 25017 / CCUG 19701 / FSC 153 / O#319-036).